A 549-amino-acid polypeptide reads, in one-letter code: Probable protein kinase UbiB (549 aa).

The 379-residue stretch at 123–501 (DFDNTPLASA…QQKAHKSNYL (379 aa)) folds into the Protein kinase domain. ATP-binding positions include 129-137 (LASASISQV) and Lys152. Asp287 acts as the Proton acceptor in catalysis. 2 helical membrane passes run 498–518 (SNYLLITSAVLVICGTILFNQ) and 520–540 (ATLWASYGSITVGVVLWLLGW).

Belongs to the ABC1 family. UbiB subfamily.

Its subcellular location is the cell inner membrane. The protein operates within cofactor biosynthesis; ubiquinone biosynthesis [regulation]. Is probably a protein kinase regulator of UbiI activity which is involved in aerobic coenzyme Q (ubiquinone) biosynthesis. This chain is Probable protein kinase UbiB, found in Shewanella woodyi (strain ATCC 51908 / MS32).